A 91-amino-acid chain; its full sequence is Small ribosomal subunit protein uS19 (91 aa).

This sequence belongs to the universal ribosomal protein uS19 family.

Its function is as follows. Protein S19 forms a complex with S13 that binds strongly to the 16S ribosomal RNA. The chain is Small ribosomal subunit protein uS19 from Leptothrix cholodnii (strain ATCC 51168 / LMG 8142 / SP-6) (Leptothrix discophora (strain SP-6)).